A 78-amino-acid chain; its full sequence is Xibalbin-13 1 (78 aa).

A signal peptide spans 1 to 27 (MKEANTRRYIHLCLVVVLVSTIITTEA). Residues 28-31 (EDDR) constitute a propeptide that is removed on maturation. Intrachain disulfides connect cysteine 34-cysteine 49, cysteine 41-cysteine 54, cysteine 48-cysteine 65, and cysteine 56-cysteine 63. Serine 76 bears the Serine amide mark.

This sequence belongs to the xibalbin-13 family. Expressed by the venom gland.

Its subcellular location is the secreted. Functionally, probable neurotoxin. Strongly inhibits voltage-gated potassium channels (Kv1.1/KCNA1, Kv1.2/KCNA2, Kv1.3/KCNA3, and Kv1.6/KCNA6) and mildly inhibits sodium channels (Nav1.2/SCN2A, Nav1.4/SCN4A, Nav1.5/SCN5A, Nav1.6/SCN8A, and BgNav). Induces activation of protein kinase A type II (PKA-II) and MAP kinase Erk1/2 in primary nociceptive and non-nociceptive sensory neurons. Does not show cytotoxic activity. Does not have an impact on Ca2+, cAMP, and NO signaling in the cell types analyzed. Does not interfere with the adhesion of leukocytes to endothelial cells. The polypeptide is Xibalbin-13 1 (Xibalbanus tulumensis (Blind cave remipede)).